The following is a 234-amino-acid chain: Sugar fermentation stimulation protein A (234 aa).

A DNA-binding region (H-T-H motif) is located at residues 201-220 (LLSEAQNKGVEVLAYKAELS).

Belongs to the SfsA family.

In terms of biological role, binds to DNA non-specifically. Could be a regulatory factor involved in maltose metabolism. The sequence is that of Sugar fermentation stimulation protein A from Salmonella gallinarum (strain 287/91 / NCTC 13346).